Reading from the N-terminus, the 785-residue chain is Conserved oligomeric Golgi complex subunit 4 (785 aa).

The interval 1–24 (MADLDSPPKLSGVQQPSEGVGGGR) is disordered. Position 2 is an N-acetylalanine (A2). Residues 2–84 (ADLDSPPKLS…VTLHRMGPNL (83 aa)) form an interaction with SCFD1 region. S6 carries the phosphoserine modification. The interval 85 to 153 (QLIEGDAKQL…TALRSEDYEQ (69 aa)) is interaction with STX5. Positions 618–740 (PQVQPWINSF…SQMATILNLE (123 aa)) are d domain. The interval 741–785 (RVTEILDYWGPNSGPLTWRLTPAEVRQVLALRIDFRSEDIKRLRL) is e domain; essential for proper cell surface glycosylation.

Belongs to the COG4 family. As to quaternary structure, monomer. Component of the conserved oligomeric Golgi (COG) complex which is composed of eight different subunits and is required for normal Golgi morphology and localization. Mediates interaction of SCFD1 with the COG complex. Interacts with STX5.

It localises to the cytoplasm. The protein resides in the cytosol. It is found in the golgi apparatus membrane. In terms of biological role, required for normal Golgi function. Plays a role in SNARE-pin assembly and Golgi-to-ER retrograde transport via its interaction with SCFD1. This chain is Conserved oligomeric Golgi complex subunit 4 (COG4), found in Homo sapiens (Human).